A 341-amino-acid polypeptide reads, in one-letter code: Putative ubiquitin-like-specific protease 1B (341 aa).

Active-site residues include H231, D248, and C300.

It belongs to the peptidase C48 family.

Its function is as follows. Protease that catalyzes two essential functions in the SUMO pathway: processing of full-length SUMOs to their mature forms and deconjugation of SUMO from targeted proteins. This is Putative ubiquitin-like-specific protease 1B (ULP1B) from Arabidopsis thaliana (Mouse-ear cress).